The primary structure comprises 919 residues: WD repeat-containing protein 47 (919 aa).

The 33-residue stretch at 10 to 42 folds into the LisH domain; sequence KEVEIIKLILDFLNSKKLHISMLALEKESGVIN. Residues 45–102 form the CTLH domain; that stretch reads FSDDMLFLRQLILDGQWDEVLQFIQPLECMEKFDKKRFRYIILKQKFLEALCVNNAMS. Threonine 285 is modified (phosphothreonine). 4 positions are modified to phosphoserine: serine 289, serine 292, serine 297, and serine 312. The segment at 393–421 is disordered; the sequence is GQSSVSEKEPANGAQNPGPAKQEKNELRD. A Phosphoserine modification is found at serine 422. The segment at 500–590 is disordered; that stretch reads LNQQCNGSKG…SLSRSKGEED (91 aa). A compositionally biased stretch (polar residues) spans 517–551; it reads VTSFTTPPQDSSQRLTHDASNIHTSTPRNPGSTNH. At threonine 542 the chain carries Phosphothreonine. 7 WD repeats span residues 604 to 643, 659 to 698, 706 to 748, 753 to 791, 798 to 837, 840 to 879, and 886 to 918; these read EDTQAVRAVAFHPAGGLYAVGSNSKTLRVCAYPDVIDPSA, HHKGSIYCVAWSPCGQLLATGSNDKYVKVLPFNAETCNAT, MHDG…GQGL, GHTGHILALYTWSGWMIASGSQDKTVRFWDLRVPSCVRV, GTGSAVASVAVDPSGRLLATGQEDSSCMLYDIRGGRMVQS, PHSSDVRSVRFSPGAHYLLTGSYDMKIKVTDLQGDLTKQL, and EHKDKVIQCRWHTQDLSFLSSSADRTVTLWTYN.

As to quaternary structure, interacts with MAP1S (via WD repeats).

It localises to the cytoplasm. The protein resides in the cytoskeleton. In Homo sapiens (Human), this protein is WD repeat-containing protein 47 (WDR47).